Reading from the N-terminus, the 471-residue chain is Glutamate--tRNA ligase (471 aa).

Positions 9-19 match the 'HIGH' region motif; that stretch reads PSPTGYLHVGG. Zn(2+) contacts are provided by cysteine 98, cysteine 100, cysteine 125, and aspartate 127. The 'KMSKS' region signature appears at 237–241; the sequence is KLSKR. Residue lysine 240 coordinates ATP.

This sequence belongs to the class-I aminoacyl-tRNA synthetase family. Glutamate--tRNA ligase type 1 subfamily. Monomer. It depends on Zn(2+) as a cofactor.

The protein localises to the cytoplasm. The enzyme catalyses tRNA(Glu) + L-glutamate + ATP = L-glutamyl-tRNA(Glu) + AMP + diphosphate. In terms of biological role, catalyzes the attachment of glutamate to tRNA(Glu) in a two-step reaction: glutamate is first activated by ATP to form Glu-AMP and then transferred to the acceptor end of tRNA(Glu). The protein is Glutamate--tRNA ligase of Yersinia pseudotuberculosis serotype IB (strain PB1/+).